The following is a 252-amino-acid chain: Chitooligosaccharide deacetylase (252 aa).

Residues His61 and His125 each contribute to the Mg(2+) site.

It belongs to the YdjC deacetylase family. ChbG subfamily. As to quaternary structure, homodimer. The cofactor is Mg(2+).

It is found in the cytoplasm. It carries out the reaction N,N'-diacetylchitobiose + H2O = N-acetyl-beta-D-glucosaminyl-(1-&gt;4)-D-glucosamine + acetate. It catalyses the reaction diacetylchitobiose-6'-phosphate + H2O = N'-monoacetylchitobiose-6'-phosphate + acetate. It participates in glycan degradation; chitin degradation. Functionally, involved in the degradation of chitin. ChbG is essential for growth on the acetylated chitooligosaccharides chitobiose and chitotriose but is dispensable for growth on cellobiose and chitosan dimer, the deacetylated form of chitobiose. Deacetylation of chitobiose-6-P and chitotriose-6-P is necessary for both the activation of the chb promoter by the regulatory protein ChbR and the hydrolysis of phosphorylated beta-glucosides by the phospho-beta-glucosidase ChbF. Catalyzes the removal of only one acetyl group from chitobiose-6-P to yield monoacetylchitobiose-6-P, the inducer of ChbR and the substrate of ChbF. The sequence is that of Chitooligosaccharide deacetylase from Escherichia coli O127:H6 (strain E2348/69 / EPEC).